The chain runs to 331 residues: MPVVESDEKVDDTAKDLSSLGLSDKETARGEEKEEKGTVAAPSAPTVDTVQPTTGPSWPATAPDHPLSKFYDIFEDVIKSAEHNEVYGILLTKENPFQTKLILQKFLRANQNDLDKAKQQLLETLKWRKEFDPVKATGEKFDKTRFGGLGYVLEVQGVPESKNEKDVVTFNIYGAVKDKKATFGDLEGFLRWRVGLMEKSVQKLNLASATTPVPNYGEGPDPYQGFQIHDYLQVSFLRQDPAVKAATSKTIEVLGRYYPETLSRKFFVNVPVIMGWMYTAAKLIVAKETAKKFAVLSYGNQLAGELGVDIPAVYGGTKEDLESVAEGMSLE.

A disordered region spans residues 1–62; it reads MPVVESDEKV…TTGPSWPATA (62 aa). Positions 23–37 are enriched in basic and acidic residues; that stretch reads SDKETARGEEKEEKG. Positions 46 to 56 are enriched in polar residues; it reads TVDTVQPTTGP. Positions 148–322 constitute a CRAL-TRIO domain; the sequence is GLGYVLEVQG…VYGGTKEDLE (175 aa). Positions 173, 193, 229, 231, and 265 each coordinate heme.

It belongs to the SFH5 family. It depends on heme b as a cofactor.

Its subcellular location is the cytoplasm. It localises to the endoplasmic reticulum membrane. The protein localises to the microsome membrane. It catalyses the reaction a 1,2-diacyl-sn-glycero-3-phospho-(1D-myo-inositol)(in) = a 1,2-diacyl-sn-glycero-3-phospho-(1D-myo-inositol)(out). In terms of biological role, non-classical phosphatidylinositol (PtdIns) transfer protein (PITP), which exhibits PtdIns-binding/transfer activity in the absence of detectable PtdCho-binding/transfer activity. Regulates PtdIns(4,5)P2 homeostasis at the plasma membrane. Heme-binding protein that may play a role in organic oxidant-induced stress responses. The sequence is that of Phosphatidylinositol transfer protein SFH5 (SFH5) from Phaeosphaeria nodorum (strain SN15 / ATCC MYA-4574 / FGSC 10173) (Glume blotch fungus).